We begin with the raw amino-acid sequence, 131 residues long: MSWQAYVDEHLMCEIEGHHLTSAAIVGHDGAVWAQSTAFPQFKTEEMTNIMKDFDEPGFLAPTGLFLGPTKYMVIQGEPGAVIRGKKGSGGITVKKTGQAMVVGIYDEPMTPGQCNMVVERLGDYLLEQGL.

Cysteines 13 and 115 form a disulfide. An Involved in PIP2 interaction motif is present at residues 81 to 97; the sequence is AVIRGKKGSGGITVKKT. A Phosphothreonine modification is found at Thr111.

Belongs to the profilin family. Occurs in many kinds of cells as a complex with monomeric actin in a 1:1 ratio. Post-translationally, phosphorylated by MAP kinases.

It localises to the cytoplasm. It is found in the cytoskeleton. Functionally, binds to actin and affects the structure of the cytoskeleton. At high concentrations, profilin prevents the polymerization of actin, whereas it enhances it at low concentrations. This is Profilin-7 from Zea mays (Maize).